Here is a 101-residue protein sequence, read N- to C-terminus: MFVKKGDKVRVIAGKDKGVEALVVTALPKVNKVVVEGVNIVKKHQKPNNENPQGAIVEKEAPIHVSNVQVLDKNGVAGRVGYKFVDGKKVRYNKKSGEVLD.

This sequence belongs to the universal ribosomal protein uL24 family. Part of the 50S ribosomal subunit.

Its function is as follows. One of two assembly initiator proteins, it binds directly to the 5'-end of the 23S rRNA, where it nucleates assembly of the 50S subunit. In terms of biological role, one of the proteins that surrounds the polypeptide exit tunnel on the outside of the subunit. The chain is Large ribosomal subunit protein uL24 from Streptococcus sanguinis (strain SK36).